The chain runs to 128 residues: Con-Ins F2b (128 aa).

A signal peptide spans 1-24 (MTTSSYFLLVALGLLLYVCRSSFG). 4 cysteine pairs are disulfide-bonded: Cys29–Cys104, Cys41–Cys107, Cys53–Cys120, and Cys106–Cys111. The propeptide at 59–89 (LQGGTGKKRGRASLLRKRRAFLSMLKARAKR) is c peptide. Position 115 is a 4-carboxyglutamate; partial (Glu115). Ser127 is subject to Serine amide.

It belongs to the insulin family. As to quaternary structure, heterodimer of A and B chains; disulfide-linked. Expressed by the venom gland.

It localises to the secreted. Functionally, this venom insulin facilitates prey capture by rapidly inducing hypoglycemic shock. Intraperitoneal injection of this peptide into zebrafish lowers blood glucose with the same potency than human insulin. In vivo, when applied to water, this peptide reduces overall locomotor activity of zebrafish larvae, observed as a significant decrease in the percentage of time spent swimming and movement frequency. In Conus floridulus (Cone snail), this protein is Con-Ins F2b.